Reading from the N-terminus, the 1057-residue chain is Carbamoyl phosphate synthase large chain (1057 aa).

Residues 1–401 (MPKRNDIKTI…SLLKAIRSLE (401 aa)) are carboxyphosphate synthetic domain. 12 residues coordinate ATP: Arg129, Arg169, Gly175, Gly176, Lys208, Ile210, Glu215, Gly241, Ile242, His243, Gln284, and Glu298. The region spanning 133 to 327 (RTLMNDLNVP…IAKLAAKIAV (195 aa)) is the ATP-grasp 1 domain. Gln284, Glu298, and Asn300 together coordinate Mg(2+). Residues Gln284, Glu298, and Asn300 each contribute to the Mn(2+) site. The segment at 402–546 (YGVHHLGLPN…YGTYETENES (145 aa)) is oligomerization domain. Residues 547–929 (IVTDKEKILV…ALFKGLTGSG (383 aa)) form a carbamoyl phosphate synthetic domain region. The ATP-grasp 2 domain maps to 671 to 861 (EALLRKINVP…MAQLAMRAII (191 aa)). Residues Arg707, Arg746, Leu748, Glu752, Gly777, Val778, His779, Ser780, Gln820, and Glu832 each coordinate ATP. 3 residues coordinate Mg(2+): Gln820, Glu832, and Asn834. Gln820, Glu832, and Asn834 together coordinate Mn(2+). In terms of domain architecture, MGS-like spans 930 to 1057 (VEVKDHGTVL…ESMTFTMRQM (128 aa)). Residues 930–1057 (VEVKDHGTVL…ESMTFTMRQM (128 aa)) are allosteric domain.

Belongs to the CarB family. In terms of assembly, composed of two chains; the small (or glutamine) chain promotes the hydrolysis of glutamine to ammonia, which is used by the large (or ammonia) chain to synthesize carbamoyl phosphate. Tetramer of heterodimers (alpha,beta)4. Requires Mg(2+) as cofactor. It depends on Mn(2+) as a cofactor.

The enzyme catalyses hydrogencarbonate + L-glutamine + 2 ATP + H2O = carbamoyl phosphate + L-glutamate + 2 ADP + phosphate + 2 H(+). The catalysed reaction is hydrogencarbonate + NH4(+) + 2 ATP = carbamoyl phosphate + 2 ADP + phosphate + 2 H(+). The protein operates within amino-acid biosynthesis; L-arginine biosynthesis; carbamoyl phosphate from bicarbonate: step 1/1. It functions in the pathway pyrimidine metabolism; UMP biosynthesis via de novo pathway; (S)-dihydroorotate from bicarbonate: step 1/3. In terms of biological role, large subunit of the glutamine-dependent carbamoyl phosphate synthetase (CPSase). CPSase catalyzes the formation of carbamoyl phosphate from the ammonia moiety of glutamine, carbonate, and phosphate donated by ATP, constituting the first step of 2 biosynthetic pathways, one leading to arginine and/or urea and the other to pyrimidine nucleotides. The large subunit (synthetase) binds the substrates ammonia (free or transferred from glutamine from the small subunit), hydrogencarbonate and ATP and carries out an ATP-coupled ligase reaction, activating hydrogencarbonate by forming carboxy phosphate which reacts with ammonia to form carbamoyl phosphate. This Staphylococcus aureus (strain MRSA252) protein is Carbamoyl phosphate synthase large chain.